We begin with the raw amino-acid sequence, 456 residues long: tRNA modification GTPase MnmE (456 aa).

Residues Lys-29, Glu-87, and Arg-126 each coordinate (6S)-5-formyl-5,6,7,8-tetrahydrofolate. The region spanning Gly-222 to Asp-380 is the TrmE-type G domain. K(+) is bound at residue Asn-232. Residues Asn-232–Ser-237, Ser-251–Thr-257, and Asp-276–Gly-279 contribute to the GTP site. Mg(2+) is bound at residue Ser-236. The K(+) site is built by Ser-251, Ile-253, and Thr-256. Residue Thr-257 coordinates Mg(2+). Position 456 (Lys-456) interacts with (6S)-5-formyl-5,6,7,8-tetrahydrofolate.

It belongs to the TRAFAC class TrmE-Era-EngA-EngB-Septin-like GTPase superfamily. TrmE GTPase family. Homodimer. Heterotetramer of two MnmE and two MnmG subunits. Requires K(+) as cofactor.

The protein localises to the cytoplasm. Exhibits a very high intrinsic GTPase hydrolysis rate. Involved in the addition of a carboxymethylaminomethyl (cmnm) group at the wobble position (U34) of certain tRNAs, forming tRNA-cmnm(5)s(2)U34. The sequence is that of tRNA modification GTPase MnmE from Wolinella succinogenes (strain ATCC 29543 / DSM 1740 / CCUG 13145 / JCM 31913 / LMG 7466 / NCTC 11488 / FDC 602W) (Vibrio succinogenes).